We begin with the raw amino-acid sequence, 309 residues long: Dihydroorotate dehydrogenase B (NAD(+)), catalytic subunit (309 aa).

FMN-binding positions include serine 21 and 45–46 (KA). Residues lysine 45 and 69–73 (NAIGL) contribute to the substrate site. FMN contacts are provided by asparagine 99 and asparagine 127. Asparagine 127 provides a ligand contact to substrate. Cysteine 130 acts as the Nucleophile in catalysis. FMN-binding residues include lysine 165 and isoleucine 191. 192 to 193 (NT) contributes to the substrate binding site. FMN-binding positions include glycine 217, 243 to 244 (GG), and 265 to 266 (GT).

Belongs to the dihydroorotate dehydrogenase family. Type 1 subfamily. As to quaternary structure, heterotetramer of 2 PyrK and 2 PyrD type B subunits. It depends on FMN as a cofactor.

It localises to the cytoplasm. It catalyses the reaction (S)-dihydroorotate + NAD(+) = orotate + NADH + H(+). It participates in pyrimidine metabolism; UMP biosynthesis via de novo pathway; orotate from (S)-dihydroorotate (NAD(+) route): step 1/1. Functionally, catalyzes the conversion of dihydroorotate to orotate with NAD(+) as electron acceptor. The sequence is that of Dihydroorotate dehydrogenase B (NAD(+)), catalytic subunit (pyrD) from Bacillus thuringiensis (strain Al Hakam).